Here is a 30-residue protein sequence, read N- to C-terminus: AKLDETLTMLKALTDAKGVPGNEREARDVM.

It belongs to the peptidase M42 family. In terms of assembly, 12 chains of two different but homologous types, alpha and beta, which can combine in various ratios. It depends on a divalent metal cation as a cofactor.

Metalloenzyme of broad specificity, releasing all N-terminal amino acids. This is Thermophilic aminopeptidase 1 alpha chain from Geobacillus stearothermophilus (Bacillus stearothermophilus).